Reading from the N-terminus, the 158-residue chain is Transcription elongation factor GreA (158 aa).

The stretch at 45–72 forms a coiled coil; sequence AEYHAAREQQSFIEGRIKQLEGELSHAE.

Belongs to the GreA/GreB family.

Functionally, necessary for efficient RNA polymerase transcription elongation past template-encoded arresting sites. The arresting sites in DNA have the property of trapping a certain fraction of elongating RNA polymerases that pass through, resulting in locked ternary complexes. Cleavage of the nascent transcript by cleavage factors such as GreA or GreB allows the resumption of elongation from the new 3'terminus. GreA releases sequences of 2 to 3 nucleotides. In Xylella fastidiosa (strain 9a5c), this protein is Transcription elongation factor GreA.